The sequence spans 130 residues: ATP synthase epsilon chain (130 aa).

The protein belongs to the ATPase epsilon chain family. F-type ATPases have 2 components, CF(1) - the catalytic core - and CF(0) - the membrane proton channel. CF(1) has five subunits: alpha(3), beta(3), gamma(1), delta(1), epsilon(1). CF(0) has three main subunits: a, b and c.

The protein resides in the cell membrane. In terms of biological role, produces ATP from ADP in the presence of a proton gradient across the membrane. The chain is ATP synthase epsilon chain from Nocardia farcinica (strain IFM 10152).